The sequence spans 189 residues: S-protein homolog 26 (189 aa).

Positions 1–25 (MISMNRLSILLFVFAFGLTMMSNTA) are cleaved as a signal peptide.

The protein belongs to the plant self-incompatibility (S1) protein family.

It is found in the secreted. This Arabidopsis thaliana (Mouse-ear cress) protein is S-protein homolog 26.